Here is a 318-residue protein sequence, read N- to C-terminus: Taste receptor type 2 member 60 (318 aa).

Topologically, residues M1 to V7 are extracellular. A helical transmembrane segment spans residues L8–R28. Residues L29–A40 lie on the Cytoplasmic side of the membrane. A helical membrane pass occupies residues A41–S61. Over L62–P88 the chain is Extracellular. The chain crosses the membrane as a helical span at residues Y89–W109. Topologically, residues F110–P128 are cytoplasmic. Residues V129 to V149 traverse the membrane as a helical segment. Topologically, residues G150–N183 are extracellular. An N-linked (GlcNAc...) asparagine glycan is attached at N179. Residues S184–M204 traverse the membrane as a helical segment. At P205–F234 the chain is on the cytoplasmic side. Residues R235 to L255 traverse the membrane as a helical segment. Over F256–V264 the chain is Extracellular. Residues F265–I285 form a helical membrane-spanning segment. Residues Y286 to P318 lie on the Cytoplasmic side of the membrane.

The protein belongs to the G-protein coupled receptor T2R family.

It localises to the membrane. Functionally, receptor that may play a role in the perception of bitterness and is gustducin-linked. May play a role in sensing the chemical composition of the gastrointestinal content. The activity of this receptor may stimulate alpha gustducin, mediate PLC-beta-2 activation and lead to the gating of TRPM5. The polypeptide is Taste receptor type 2 member 60 (TAS2R60) (Pan troglodytes (Chimpanzee)).